An 89-amino-acid polypeptide reads, in one-letter code: Small ribosomal subunit protein uS14A (89 aa).

Belongs to the universal ribosomal protein uS14 family. Part of the 30S ribosomal subunit. Contacts proteins S3 and S10.

Its function is as follows. Binds 16S rRNA, required for the assembly of 30S particles and may also be responsible for determining the conformation of the 16S rRNA at the A site. This Staphylococcus haemolyticus (strain JCSC1435) protein is Small ribosomal subunit protein uS14A.